A 449-amino-acid polypeptide reads, in one-letter code: Trigger factor (449 aa).

The 82-residue stretch at 162–243 (GEFVTINITA…ITATKQRELP (82 aa)) folds into the PPIase FKBP-type domain. A compositionally biased stretch (basic and acidic residues) spans 428-437 (GNEIDPKEYF). The disordered stretch occupies residues 428–449 (GNEIDPKEYFGEEEVAETESEA). Over residues 438–449 (GEEEVAETESEA) the composition is skewed to acidic residues.

Belongs to the FKBP-type PPIase family. Tig subfamily.

It localises to the cytoplasm. It carries out the reaction [protein]-peptidylproline (omega=180) = [protein]-peptidylproline (omega=0). Functionally, involved in protein export. Acts as a chaperone by maintaining the newly synthesized protein in an open conformation. Functions as a peptidyl-prolyl cis-trans isomerase. The protein is Trigger factor of Corynebacterium glutamicum (strain R).